Consider the following 581-residue polypeptide: Arginine--tRNA ligase (581 aa).

Positions 126-136 match the 'HIGH' region motif; it reads PNLAKEMHVGH.

Belongs to the class-I aminoacyl-tRNA synthetase family. As to quaternary structure, monomer.

The protein localises to the cytoplasm. It carries out the reaction tRNA(Arg) + L-arginine + ATP = L-arginyl-tRNA(Arg) + AMP + diphosphate. The chain is Arginine--tRNA ligase from Shewanella sp. (strain ANA-3).